The sequence spans 54 residues: Large ribosomal subunit protein bL32c (54 aa).

A compositionally biased stretch (basic residues) spans 1–20; sequence MAVPKKRVSKSKRDMRKTTW. The tract at residues 1-54 is disordered; the sequence is MAVPKKRVSKSKRDMRKTTWKNKASKEAKKALSLAKSVSTGKSKSKGFQIKSSN. A compositionally biased stretch (low complexity) spans 31–42; it reads ALSLAKSVSTGK.

This sequence belongs to the bacterial ribosomal protein bL32 family.

Its subcellular location is the plastid. The protein localises to the chloroplast. This is Large ribosomal subunit protein bL32c from Chlorokybus atmophyticus (Soil alga).